A 196-amino-acid chain; its full sequence is DnaA initiator-associating protein DiaA (196 aa).

The region spanning 34–196 (VVQSLLNGNK…DNTLFPHQEV (163 aa)) is the SIS domain.

It belongs to the SIS family. DiaA subfamily. Homotetramer; dimer of dimers.

Its function is as follows. Required for the timely initiation of chromosomal replication via direct interactions with the DnaA initiator protein. The sequence is that of DnaA initiator-associating protein DiaA from Erwinia tasmaniensis (strain DSM 17950 / CFBP 7177 / CIP 109463 / NCPPB 4357 / Et1/99).